Consider the following 154-residue polypeptide: Protein X (154 aa).

A mitochondrial targeting sequence region spans residues 68–117; that stretch reads PCALRFTSARRMETTVNAHQILPKVLHKRTLGLSAMSTTDLEAYFKDCLF.

Belongs to the orthohepadnavirus protein X family. In terms of assembly, may form homodimer. May interact with host CEBPA, CFLAR, CREB1, DDB1, E4F1, HBXIP, HSPD1/HSP60, NFKBIA, POLR2E and SMAD4. Interacts with host SMC5-SMC6 complex and induces its degradation. Interacts with host TRPC4AP; leading to prevent ubiquitination of TRPC4AP. Interacts with host PLSCR1; this interaction promotes ubiquitination and degradation of HBx and impairs HBx-mediated cell proliferation. A fraction may be phosphorylated in insect cells and HepG2 cells, a human hepatoblastoma cell line. Phosphorylated in vitro by host protein kinase C or mitogen-activated protein kinase. N-acetylated in insect cells.

The protein localises to the host cytoplasm. It localises to the host nucleus. It is found in the host mitochondrion. Its function is as follows. Multifunctional protein that plays a role in silencing host antiviral defenses and promoting viral transcription. Does not seem to be essential for HBV infection. May be directly involved in development of cirrhosis and liver cancer (hepatocellular carcinoma). Most of cytosolic activities involve modulation of cytosolic calcium. The effect on apoptosis is controversial depending on the cell types in which the studies have been conducted. May induce apoptosis by localizing in mitochondria and causing loss of mitochondrial membrane potential. May also modulate apoptosis by binding host CFLAR, a key regulator of the death-inducing signaling complex (DISC). Promotes viral transcription by using the host E3 ubiquitin ligase DDB1 to target the SMC5-SMC6 complex to proteasomal degradation. This host complex would otherwise bind to viral episomal DNA, and prevents its transcription. Moderately stimulates transcription of many different viral and cellular transcription elements. Promoters and enhancers stimulated by HBx contain DNA binding sites for NF-kappa-B, AP-1, AP-2, c-EBP, ATF/CREB, or the calcium-activated factor NF-AT. The sequence is that of Protein X from Hepatitis B virus genotype E subtype ayw4 (isolate Kou) (HBV-E).